Reading from the N-terminus, the 323-residue chain is Serine/threonine-protein phosphatase PP1-gamma catalytic subunit (323 aa).

Residue alanine 2 is modified to N-acetylalanine. Positions 64, 66, 92, and 124 each coordinate Mn(2+). The active-site Proton donor is histidine 125. Mn(2+) is bound by residues histidine 173 and histidine 248. A phosphothreonine mark is found at threonine 307 and threonine 311.

Belongs to the PPP phosphatase family. PP-1 subfamily. As to quaternary structure, PP1 comprises a catalytic subunit, PPP1CA, PPP1CB or PPP1CC, which is folded into its native form by inhibitor 2 and glycogen synthetase kinase 3, and then complexed to one or several targeting or regulatory subunits. PPP1R12A, PPP1R12B and PPP1R12C mediate binding to myosin. PPP1R3A (in skeletal muscle), PPP1R3B (in liver), PPP1R3C, PPP1R3D and PPP1R3F (in brain) mediate binding to glycogen. PPP1R15A and PPP1R15B mediate binding to EIF2S1. Part of a complex containing PPP1R15B, PP1 and NCK1/2. Interacts with PPP1R3B, PPP1R7 and CDCA2. Interacts with IKFZ1; the interaction targets PPP1CC to pericentromeric heterochromatin, dephosphorylates IKAROS, stabilizes it and prevents it from degradation. Interacts with NOM1 and PPP1R8. Component of the PTW/PP1 phosphatase complex, composed of PPP1R10/PNUTS, TOX4, WDR82, and PPP1CA or PPP1CB or PPP1CC. Interacts with PPP1R8. Interacts with NEK2. Interacts with PPP1R42; the interaction is direct. Interacts with URI1; the interaction is phosphorylation-dependent and occurs in a growth factor-dependent manner. Interacts with FOXP3. Interacts with TMEM225 (via RVxF motif). Interacts with MKI67. Interacts with RRP1B; this targets PPP1CC to the nucleolus. Interacts with DYNLT4. Interacts (via RVxF motif) with FIRRM; regulates PLK1 kinase activity. Interacts with the KNL1 complex subunit KNL1; the interaction is direct and mutually exclusive with KNL1 binding to microtubules. Component of the SHOC2-MRAS-PP1c (SMP) complex consisting of SHOC2, GTP-bound M-Ras/MRAS and the catalytic subunit of protein phosphatase 1 (either PPP1CA, PPP1CB or PPP1CC). SHOC2 and PP1c preferably bind M-Ras/MRAS, but they also bind K-Ras/KRAS, N-Ras/NRAS and H-Ras/HRAS; these interactions are GTP-dependent and both SHOC2 and PP1c are required to form a stable complex. Interacts with SHOC2 in the absence of Ras GTPases. Mn(2+) serves as cofactor. Phosphorylated by NEK2.

It localises to the cytoplasm. It is found in the nucleus. Its subcellular location is the cleavage furrow. The protein localises to the nucleolus. The protein resides in the nucleoplasm. It localises to the chromosome. It is found in the centromere. Its subcellular location is the kinetochore. The protein localises to the nucleus speckle. The protein resides in the midbody. It localises to the mitochondrion. It is found in the cytoskeleton. Its subcellular location is the microtubule organizing center. The catalysed reaction is O-phospho-L-seryl-[protein] + H2O = L-seryl-[protein] + phosphate. The enzyme catalyses O-phospho-L-threonyl-[protein] + H2O = L-threonyl-[protein] + phosphate. Its activity is regulated as follows. Inactivated by binding to URI1. Protein phosphatase that associates with over 200 regulatory proteins to form highly specific holoenzymes which dephosphorylate hundreds of biological targets. Protein phosphatase 1 (PP1) is essential for cell division, and participates in the regulation of glycogen metabolism, muscle contractility and protein synthesis. Dephosphorylates RPS6KB1. Involved in regulation of ionic conductances and long-term synaptic plasticity. May play an important role in dephosphorylating substrates such as the postsynaptic density-associated Ca(2+)/calmodulin dependent protein kinase II. Component of the PTW/PP1 phosphatase complex, which plays a role in the control of chromatin structure and cell cycle progression during the transition from mitosis into interphase. Regulates the recruitment of the SKA complex to kinetochores. Core component of the SHOC2-MRAS-PP1c (SMP) holophosphatase complex that regulates the MAPK pathway activation. Dephosphorylates MKI67 at the onset of anaphase. The SMP complex specifically dephosphorylates the inhibitory phosphorylation at 'Ser-259' of RAF1 kinase, 'Ser-365' of BRAF kinase and 'Ser-214' of ARAF kinase, stimulating their kinase activities. The SMP complex enhances the dephosphorylation activity and substrate specificity of PP1c. The chain is Serine/threonine-protein phosphatase PP1-gamma catalytic subunit (PPP1CC) from Canis lupus familiaris (Dog).